The chain runs to 620 residues: MALLQIAEPGQSAAPHQHRLAVGIDLGTTNSLVAAVRSGETATLPDELGQHSLPSIVRYTQDSVEVGALAALSSAQDPQNTIVSVKRFMGRSLADIKAGEQSFPYEFAESENGLPLFVTPQGQVNPVQVSAEILRPLIARAEKTLGGELQGVVITVPAYFDDAQRQGTKDAAALLGVKVLRLLNEPTAAAIAYGLDSKQEGVIAIYDLGGGTFDISILRLNRGVFEVLATGGDSALGGDDFDHLLQAHMQQVWQLSDIDSQLSRQLLIESRRVKEALTDAAETEAKVILADGTELTQIVTKAEFDAMIAALVKKTIASCRRTLRDAGVTTDEVLETVMVGGSTRVPLVREQVEAFFGKPPLTSIDPDRVVAIGAAIQADILVGNKPESDLLLLDVIPLSLGIETMGGLVEKVVSRNTTIPVARAQEFTTFKDGQTAMAFHVVQGERELVADCRSLARFTLKGIPPLAAGAAHIRVTFQVDADGLLSVTAMEKSTGVQSSIQVKPSFGLSDTEIATMLKDSMKYAKDDIGRRMLAEQQVEAARVLESLHAALAKDGDLLNADERGQIDAIMANVAQVAAGDDADAIKLAIEKLDEQTQDFAARRMDNSIRVAFKGQSIDNI.

The protein belongs to the heat shock protein 70 family.

Its function is as follows. Chaperone involved in the maturation of iron-sulfur cluster-containing proteins. Has a low intrinsic ATPase activity which is markedly stimulated by HscB. This chain is Chaperone protein HscA homolog, found in Shewanella baltica (strain OS195).